A 227-amino-acid polypeptide reads, in one-letter code: LexA repressor (227 aa).

A DNA-binding region (H-T-H motif) is located at residues 26–46 (FDEMKEALDLASKSGIHRLIT). Catalysis depends on for autocatalytic cleavage activity residues S147 and K185.

It belongs to the peptidase S24 family. In terms of assembly, homodimer.

It catalyses the reaction Hydrolysis of Ala-|-Gly bond in repressor LexA.. Functionally, represses a number of genes involved in the response to DNA damage (SOS response), including recA and lexA. In the presence of single-stranded DNA, RecA interacts with LexA causing an autocatalytic cleavage which disrupts the DNA-binding part of LexA, leading to derepression of the SOS regulon and eventually DNA repair. This Hyphomonas neptunium (strain ATCC 15444) protein is LexA repressor.